The following is a 61-amino-acid chain: Short neurotoxin 2 (61 aa).

4 cysteine pairs are disulfide-bonded: C3/C23, C17/C40, C42/C53, and C54/C59.

This sequence belongs to the three-finger toxin family. Short-chain subfamily. Type I alpha-neurotoxin sub-subfamily. In terms of tissue distribution, expressed by the venom gland.

Its subcellular location is the secreted. In terms of biological role, binds to muscle nicotinic acetylcholine receptor (nAChR) and inhibit acetylcholine from binding to the receptor, thereby impairing neuromuscular transmission. The polypeptide is Short neurotoxin 2 (Naja annulifera (Banded Egyptian cobra)).